The chain runs to 334 residues: Mediator of RNA polymerase II transcription subunit 4 (334 aa).

A coiled-coil region spans residues 76-100 (LIRTLKAHVEKRDEVIQQVENNLKA). The segment covering 188 to 203 (SSAQKPIIASPSASSS) has biased composition (low complexity). Disordered stretches follow at residues 188–234 (SSAQ…GYGA) and 252–334 (EKQW…GRNK). Polar residues-rich tracts occupy residues 204-225 (NGGT…TNGD) and 264-282 (ATSS…SSPS).

It belongs to the Mediator complex subunit 4 family. As to quaternary structure, component of the Mediator complex.

Its subcellular location is the nucleus. Functionally, component of the Mediator complex, a coactivator involved in the regulated transcription of nearly all RNA polymerase II-dependent genes. Mediator functions as a bridge to convey information from gene-specific regulatory proteins to the basal RNA polymerase II transcription machinery. Mediator is recruited to promoters by direct interactions with regulatory proteins and serves as a scaffold for the assembly of a functional preinitiation complex with RNA polymerase II and the general transcription factors. This chain is Mediator of RNA polymerase II transcription subunit 4 (mdt-4), found in Caenorhabditis briggsae.